The following is a 372-amino-acid chain: Signal peptide peptidase-like 1 (372 aa).

The Lumenal portion of the chain corresponds to 1–6; that stretch reads METLWT. A helical transmembrane segment spans residues 7 to 27; the sequence is LLYLLEPAPATLIVTAVTVTF. Residues 28 to 54 are Cytoplasmic-facing; it reads ASAFRALNYGKEMERNRDFSEASITLD. Residues 55–77 form a helical membrane-spanning segment; that stretch reads SSQALMIPVMSSCSLLLMFYLFS. The Lumenal portion of the chain corresponds to 78-81; sequence SVSQ. A helical transmembrane segment spans residues 82 to 104; sequence LLTAFTAIASVSSLFYWLSPYAV. At 105–123 the chain is on the cytoplasmic side; sequence YMKTQLGLSDPFLSRCCSK. The chain crosses the membrane as a helical span at residues 124 to 146; sequence SFTRIQGLLLVACAMTVVAWLIS. Topologically, residues 147 to 149 are lumenal; that stretch reads GHW. Residues 150-167 form a helical membrane-spanning segment; sequence VLNNLLGISICIAFVSHV. The Cytoplasmic segment spans residues 168–171; sequence RLPN. The chain crosses the membrane as a helical span at residues 172-192; it reads IKICAMLLVCLFVYDIFWVFF. Residue Asp186 is part of the active site. The Lumenal portion of the chain corresponds to 193–257; it reads SERFFGANVM…GVVPGVSASD (65 aa). Residues 258 to 278 traverse the membrane as a helical segment; sequence FMMLGLGDMAIPAMLLALVLC. Residue Asp265 is part of the active site. Residues 279 to 301 lie on the Cytoplasmic side of the membrane; it reads FDHRKTRDVVNIFDLKSSKGHKY. A helical membrane pass occupies residues 302–322; sequence IWYALPGYAIGLVAALAAGVL. The Lumenal segment spans residues 323 to 325; sequence THS. A helical transmembrane segment spans residues 326–346; the sequence is PQPALLYLVPSTLGPVIFMSW. The PAL motif lies at 328–330; it reads PAL. At 347–372 the chain is on the cytoplasmic side; sequence RRKDLAELWEGPALSNPIEKSHEIEI.

This sequence belongs to the peptidase A22B family. As to expression, ubiquitous.

It localises to the endosome membrane. Its function is as follows. Intramembrane-cleaving aspartic protease (I-CLiP) that cleaves type II membrane signal peptides in the hydrophobic plane of the membrane. The chain is Signal peptide peptidase-like 1 (SPPL1) from Arabidopsis thaliana (Mouse-ear cress).